Consider the following 244-residue polypeptide: Monothiol glutaredoxin-4 (244 aa).

Residues serine 2–glutamine 106 enclose the Thioredoxin domain. The Glutaredoxin domain occupies asparagine 147–asparagine 244. Lysine 164 is a binding site for glutathione. Cysteine 172 serves as a coordination point for [2Fe-2S] cluster. Glutathione-binding positions include arginine 201–lysine 205 and leucine 226–aspartate 227.

Belongs to the glutaredoxin family. Monothiol subfamily. Homodimer. Interacts with php4.

It localises to the cytoplasm. It is found in the nucleus. Its function is as follows. Monothiol glutaredoxin involved in the biogenesis of iron-sulfur clusters. Binds one iron-sulfur cluster per dimer. The iron-sulfur cluster is bound between subunits, and is complexed by a bound glutathione and a cysteine residue from each subunit. In Schizosaccharomyces pombe (strain 972 / ATCC 24843) (Fission yeast), this protein is Monothiol glutaredoxin-4 (grx4).